A 562-amino-acid polypeptide reads, in one-letter code: 3-(3-hydroxy-phenyl)propionate/3-hydroxycinnamic acid hydroxylase (562 aa).

Residues 8–37 and 275–285 contribute to the FAD site; these read DVVIVGAGPVGLTLANILGGQGVRTLIIEE and FRKGRMLLAGD.

This sequence belongs to the PheA/TfdB FAD monooxygenase family. It depends on FAD as a cofactor.

It carries out the reaction 3-(3-hydroxyphenyl)propanoate + NADH + O2 + H(+) = 3-(2,3-dihydroxyphenyl)propanoate + NAD(+) + H2O. It catalyses the reaction (2E)-3-(3-hydroxyphenyl)prop-2-enoate + NADH + O2 + H(+) = (2E)-3-(2,3-dihydroxyphenyl)prop-2-enoate + NAD(+) + H2O. It participates in aromatic compound metabolism; 3-phenylpropanoate degradation. Its function is as follows. Catalyzes the insertion of one atom of molecular oxygen into position 2 of the phenyl ring of 3-(3-hydroxyphenyl)propionate (3-HPP) and hydroxycinnamic acid (3HCI). In Mycolicibacterium smegmatis (strain ATCC 700084 / mc(2)155) (Mycobacterium smegmatis), this protein is 3-(3-hydroxy-phenyl)propionate/3-hydroxycinnamic acid hydroxylase.